Reading from the N-terminus, the 114-residue chain is C-X-C motif chemokine 5 (114 aa).

Residues 1-36 form the signal peptide; that stretch reads MSLLSSRAARVPGPSSSLCALLVLLLLLTQPGPIAS. 2 cysteine pairs are disulfide-bonded: Cys-49/Cys-75 and Cys-51/Cys-91.

Belongs to the intercrine alpha (chemokine CxC) family. Monomer. Homodimer. Post-translationally, N-terminal processed forms ENA-78(8-78) and ENA-78(9-78) are produced by proteolytic cleavage after secretion from peripheral blood monocytes.

Its subcellular location is the secreted. Involved in neutrophil activation. In vitro, ENA-78(8-78) and ENA-78(9-78) show a threefold higher chemotactic activity for neutrophil granulocytes. The chain is C-X-C motif chemokine 5 (CXCL5) from Homo sapiens (Human).